Consider the following 227-residue polypeptide: UPF0173 metal-dependent hydrolase BCE_4747 (227 aa).

The protein belongs to the UPF0173 family.

The polypeptide is UPF0173 metal-dependent hydrolase BCE_4747 (Bacillus cereus (strain ATCC 10987 / NRS 248)).